Consider the following 80-residue polypeptide: uncharacterized protein (80 aa).

This sequence belongs to the BolA/IbaG family.

This is an uncharacterized protein from Buchnera aphidicola subsp. Acyrthosiphon pisum (strain APS) (Acyrthosiphon pisum symbiotic bacterium).